The primary structure comprises 355 residues: Elongation factor Ts (355 aa).

Positions 82 to 85 (TDFV) are involved in Mg(2+) ion dislocation from EF-Tu.

This sequence belongs to the EF-Ts family.

The protein localises to the cytoplasm. Its function is as follows. Associates with the EF-Tu.GDP complex and induces the exchange of GDP to GTP. It remains bound to the aminoacyl-tRNA.EF-Tu.GTP complex up to the GTP hydrolysis stage on the ribosome. The polypeptide is Elongation factor Ts (Helicobacter acinonychis (strain Sheeba)).